Reading from the N-terminus, the 184-residue chain is Elongation factor P (184 aa).

The protein belongs to the elongation factor P family.

Its subcellular location is the cytoplasm. The protein operates within protein biosynthesis; polypeptide chain elongation. Functionally, involved in peptide bond synthesis. Stimulates efficient translation and peptide-bond synthesis on native or reconstituted 70S ribosomes in vitro. Probably functions indirectly by altering the affinity of the ribosome for aminoacyl-tRNA, thus increasing their reactivity as acceptors for peptidyl transferase. The sequence is that of Elongation factor P from Variovorax paradoxus (strain S110).